A 392-amino-acid chain; its full sequence is Succinate--CoA ligase [ADP-forming] subunit beta (392 aa).

In terms of domain architecture, ATP-grasp spans 9–248 (KEILRGFGVT…TSEEDPLEVE (240 aa)). ATP-binding positions include Lys50, 57 to 59 (GRG), Glu103, Met106, and Glu111. Positions 203 and 217 each coordinate Mg(2+). Residues Asn268 and 325 to 327 (GIV) contribute to the substrate site.

The protein belongs to the succinate/malate CoA ligase beta subunit family. Heterotetramer of two alpha and two beta subunits. The cofactor is Mg(2+).

It catalyses the reaction succinate + ATP + CoA = succinyl-CoA + ADP + phosphate. It carries out the reaction GTP + succinate + CoA = succinyl-CoA + GDP + phosphate. It participates in carbohydrate metabolism; tricarboxylic acid cycle; succinate from succinyl-CoA (ligase route): step 1/1. Its function is as follows. Succinyl-CoA synthetase functions in the citric acid cycle (TCA), coupling the hydrolysis of succinyl-CoA to the synthesis of either ATP or GTP and thus represents the only step of substrate-level phosphorylation in the TCA. The beta subunit provides nucleotide specificity of the enzyme and binds the substrate succinate, while the binding sites for coenzyme A and phosphate are found in the alpha subunit. The protein is Succinate--CoA ligase [ADP-forming] subunit beta of Chloroherpeton thalassium (strain ATCC 35110 / GB-78).